The sequence spans 517 residues: Cytochrome P450 monooxygenase 124 (517 aa).

Residues 3-23 (SLLVLFVSLLALGALKKHLDF) traverse the membrane as a helical segment. C453 serves as a coordination point for heme.

The protein belongs to the cytochrome P450 family. Heme serves as cofactor.

The protein resides in the membrane. It functions in the pathway secondary metabolite biosynthesis. Cytochrome P450 monooxygenase that is able to use trans-stilbene as a substrate for oxidation. The protein is Cytochrome P450 monooxygenase 124 of Postia placenta (strain ATCC 44394 / Madison 698-R) (Brown rot fungus).